The chain runs to 437 residues: tRNA pseudouridine synthase Pus10 (437 aa).

Residues 76–198 (VARDVVEHLS…GGGVDIQVNS (123 aa)) enclose the THUMP domain. Residue Asp-253 is the Nucleophile of the active site. Substrate is bound by residues Tyr-321 and Tyr-394.

Belongs to the pseudouridine synthase Pus10 family.

The enzyme catalyses uridine(54) in tRNA = pseudouridine(54) in tRNA. It catalyses the reaction uridine(55) in tRNA = pseudouridine(55) in tRNA. Its function is as follows. Responsible for synthesis of pseudouridine from uracil-54 and uracil-55 in the psi GC loop of transfer RNAs. The chain is tRNA pseudouridine synthase Pus10 from Aeropyrum pernix (strain ATCC 700893 / DSM 11879 / JCM 9820 / NBRC 100138 / K1).